Consider the following 630-residue polypeptide: Ubiquitin carboxyl-terminal hydrolase MINDY-2 (630 aa).

The tract at residues 1–209 (MESGPESLQP…RVPEEEEGAA (209 aa)) is disordered. Over residues 24–33 (GSPQEGQQET) the composition is skewed to polar residues. A Phosphoserine modification is found at Ser94. Composition is skewed to low complexity over residues 141–163 (EESA…SCSD) and 170–191 (SPSL…SSEF). Catalysis depends on Cys267, which acts as the Nucleophile. The active-site Proton acceptor is His449. A ubiquitin-binding domain (UBD) region spans residues 508 to 560 (GQQDQIDQDYLMALSLQQEQQSQEINWEQIPEGISDLELAKKLQEEEDRRASQ). Residues 564-599 (EQEQAAAAAASASASASASASTQAPQSQPVQASPSS) show a composition bias toward low complexity. The disordered stretch occupies residues 564 to 630 (EQEQAAAAAA…EKEKNSCVIL (67 aa)). Positions 606 to 630 (SERKRKEPREKDKEKEKEKNSCVIL) are enriched in basic and acidic residues.

It belongs to the MINDY deubiquitinase family. FAM63 subfamily.

It catalyses the reaction Thiol-dependent hydrolysis of ester, thioester, amide, peptide and isopeptide bonds formed by the C-terminal Gly of ubiquitin (a 76-residue protein attached to proteins as an intracellular targeting signal).. In terms of biological role, hydrolase that can remove 'Lys-48'-linked conjugated ubiquitin from proteins. Can also bind to polyubiquitin chains of different linkage types, including 'Lys-6', 'Lys-11', 'Lys-29', 'Lys-33' and 'Lys-63'. May play a regulatory role at the level of protein turnover. This Bos taurus (Bovine) protein is Ubiquitin carboxyl-terminal hydrolase MINDY-2 (MINDY2).